The chain runs to 356 residues: Guanine nucleotide-binding protein alpha-3 subunit (356 aa).

The tract at residues 1 to 26 is disordered; that stretch reads MGACMSKNDEETEQKKRSQKIDRDLE. Gly-2 carries the N-myristoyl glycine lipid modification. Cys-4 is lipidated: S-palmitoyl cysteine. Residues 7–23 are compositionally biased toward basic and acidic residues; sequence KNDEETEQKKRSQKIDR. Positions 34-356 constitute a G-alpha domain; it reads KECKILLLGS…NNALKDSGIL (323 aa). The tract at residues 37-50 is G1 motif; that stretch reads KILLLGSGESGKST. GTP is bound by residues 42 to 49, 179 to 185, 204 to 208, 273 to 276, and Ala-328; these read GSGESGKS, LRARTKT, DVGGQ, and NKVD. Mg(2+)-binding residues include Ser-49 and Thr-185. The tract at residues 177-185 is G2 motif; the sequence is DVLRARTKT. Positions 200 to 209 are G3 motif; the sequence is IHMFDVGGQR. A G4 motif region spans residues 269–276; it reads ILFLNKVD. Positions 326 to 331 are G5 motif; the sequence is TQATDT.

The protein belongs to the G-alpha family. G(q) subfamily. In terms of assembly, g proteins are composed of 3 units; alpha, beta and gamma. The alpha chain contains the guanine nucleotide binding site.

Its function is as follows. Guanine nucleotide-binding proteins (G proteins) are involved as modulators or transducers in various transmembrane signaling systems. Involved in conidiation. This chain is Guanine nucleotide-binding protein alpha-3 subunit (gna-3), found in Neurospora crassa (strain ATCC 24698 / 74-OR23-1A / CBS 708.71 / DSM 1257 / FGSC 987).